Consider the following 146-residue polypeptide: Cysteine protease inhibitor 3 (146 aa).

2 disulfides stabilise this stretch: Cys-8–Cys-60 and Cys-109–Cys-115.

This sequence belongs to the protease inhibitor I3 (leguminous Kunitz-type inhibitor) family.

The protein resides in the vacuole. Inhibitor of cysteine proteases. May protect the plant by inhibiting proteases of invading organisms. In Solanum tuberosum (Potato), this protein is Cysteine protease inhibitor 3.